Consider the following 126-residue polypeptide: Small ribosomal subunit protein uS13 (126 aa).

The disordered stretch occupies residues 92 to 126 (HRMGLPVRGQRTRTNARTRRGRRQTVAGKKKAPGK). The segment covering 101–126 (QRTRTNARTRRGRRQTVAGKKKAPGK) has biased composition (basic residues).

This sequence belongs to the universal ribosomal protein uS13 family. In terms of assembly, part of the 30S ribosomal subunit. Forms a loose heterodimer with protein S19. Forms two bridges to the 50S subunit in the 70S ribosome.

Located at the top of the head of the 30S subunit, it contacts several helices of the 16S rRNA. In the 70S ribosome it contacts the 23S rRNA (bridge B1a) and protein L5 of the 50S subunit (bridge B1b), connecting the 2 subunits; these bridges are implicated in subunit movement. Contacts the tRNAs in the A and P-sites. This Nostoc punctiforme (strain ATCC 29133 / PCC 73102) protein is Small ribosomal subunit protein uS13.